Consider the following 218-residue polypeptide: Uracil-DNA glycosylase (218 aa).

The active-site Proton acceptor is Asp59.

Belongs to the uracil-DNA glycosylase (UDG) superfamily. UNG family.

The protein localises to the cytoplasm. It carries out the reaction Hydrolyzes single-stranded DNA or mismatched double-stranded DNA and polynucleotides, releasing free uracil.. Excises uracil residues from the DNA which can arise as a result of misincorporation of dUMP residues by DNA polymerase or due to deamination of cytosine. In Staphylococcus aureus (strain bovine RF122 / ET3-1), this protein is Uracil-DNA glycosylase.